The primary structure comprises 503 residues: Depupylase (503 aa).

The Mg(2+) site is built by Glu-8 and Tyr-92. Asp-94 functions as the Proton acceptor in the catalytic mechanism. A Mg(2+)-binding site is contributed by Glu-99. 101-102 is a binding site for ATP; the sequence is ST. His-155 is a Mg(2+) binding site. Asn-157 and Arg-239 together coordinate ATP. Residue His-241 coordinates Mg(2+).

The protein belongs to the Pup ligase/Pup deamidase family. Pup deamidase subfamily. Likely interacts with the C-terminal half of the prokaryotic ubiquitin-like protein Pup. It depends on ATP as a cofactor.

It functions in the pathway protein degradation; proteasomal Pup-dependent pathway. In terms of biological role, displays depupylase (DPUP) activity, removing conjugated Pup from target proteins; is thus involved in the recycling of Pup and may function similarly to deubiquitinases (DUBs) in eukaryotes to prevent or promote proteasomal degradation of certain proteins. Is also able to catalyze the deamidation of the C-terminal glutamine to glutamate in a variant of the prokaryotic ubiquitin-like protein Pup; however, since Pup from A.cellulolyticus possesses a C-terminal glutamate, this deamidase activity may be of no significance in vivo. This is Depupylase (dop) from Acidothermus cellulolyticus (strain ATCC 43068 / DSM 8971 / 11B).